The following is a 299-amino-acid chain: Porphobilinogen deaminase (299 aa).

The residue at position 242 (Cys-242) is an S-(dipyrrolylmethanemethyl)cysteine.

Belongs to the HMBS family. Monomer. It depends on dipyrromethane as a cofactor.

The enzyme catalyses 4 porphobilinogen + H2O = hydroxymethylbilane + 4 NH4(+). It participates in porphyrin-containing compound metabolism; protoporphyrin-IX biosynthesis; coproporphyrinogen-III from 5-aminolevulinate: step 2/4. Its function is as follows. Tetrapolymerization of the monopyrrole PBG into the hydroxymethylbilane pre-uroporphyrinogen in several discrete steps. The chain is Porphobilinogen deaminase (hemC) from Rickettsia prowazekii (strain Madrid E).